The sequence spans 307 residues: Upstream stimulatory factor 1 (307 aa).

2 disordered regions span residues aspartate 104–glycine 131 and glutamine 168–arginine 207. The span at proline 122–glycine 131 shows a compositional bias: low complexity. The span at aspartate 187 to arginine 207 shows a compositional bias: basic and acidic residues. Residues lysine 196–leucine 251 form the bHLH domain. A leucine-zipper region spans residues leucine 268–leucine 289.

Efficient DNA binding requires dimerization with another bHLH protein. Binds DNA as a homodimer or a heterodimer. In terms of tissue distribution, oocyte and somatic tissue. Oocytic and somatic forms of this protein exist, probably as a result of post-translational modifications or minor splicing differences.

The protein resides in the nucleus. In terms of biological role, may act as a regulator of transcription factor IIIA (TFIIIA) gene expression. In Xenopus borealis (Kenyan clawed frog), this protein is Upstream stimulatory factor 1 (usf1).